Here is a 281-residue protein sequence, read N- to C-terminus: 2-dehydro-3-deoxyphosphooctonate aldolase (281 aa).

It belongs to the KdsA family.

It localises to the cytoplasm. It catalyses the reaction D-arabinose 5-phosphate + phosphoenolpyruvate + H2O = 3-deoxy-alpha-D-manno-2-octulosonate-8-phosphate + phosphate. It participates in carbohydrate biosynthesis; 3-deoxy-D-manno-octulosonate biosynthesis; 3-deoxy-D-manno-octulosonate from D-ribulose 5-phosphate: step 2/3. It functions in the pathway bacterial outer membrane biogenesis; lipopolysaccharide biosynthesis. This is 2-dehydro-3-deoxyphosphooctonate aldolase from Pseudomonas fluorescens (strain SBW25).